A 520-amino-acid polypeptide reads, in one-letter code: L-tyrosine:2-oxoglutarate aminotransferase amt1 (520 aa).

The protein belongs to the class-I pyridoxal-phosphate-dependent aminotransferase family. Requires pyridoxal 5'-phosphate as cofactor.

The catalysed reaction is L-tyrosine + 2-oxoglutarate = 3-(4-hydroxyphenyl)pyruvate + L-glutamate. The protein operates within secondary metabolite biosynthesis. Functionally, an L-tyrosine:2-oxoglutarate aminotransferase (probably amt1) and atromentin synthetase nps3 catalyze consecutive steps to turn over L-tyrosine into atromentin, which represents the generic precursor molecule for the entire terphenylquinone and pulvinic acid family of pigments, which are widely distributed secondary metabolites in homobasidiomycetes. The first step catalyzed by amt1 converts L-tyrosine in to 4-hydroxyphenylpyruvate (4-HPP). Adenylation of two 4-HPP monomers by the nps3 adenylation (A) domain, covalent tethering of the monomers as a thioester and oxoester onto the nps3 thiolation (T) and thioesterase (TE) domains, respectively, and symmetric C-C-bond formation between two monomers catalyzed by the nps3 TE domain leads to atromentin. Follow-up products of atromentin in S.lacrymans include atromentic acid, xerocomic acid, isoxerocomic acid and variegatic acid. The protein is L-tyrosine:2-oxoglutarate aminotransferase amt1 (amt1) of Serpula lacrymans var. lacrymans (strain S7.9) (Dry rot fungus).